Reading from the N-terminus, the 93-residue chain is Putative pterin-4-alpha-carbinolamine dehydratase (93 aa).

The protein belongs to the pterin-4-alpha-carbinolamine dehydratase family.

It carries out the reaction (4aS,6R)-4a-hydroxy-L-erythro-5,6,7,8-tetrahydrobiopterin = (6R)-L-erythro-6,7-dihydrobiopterin + H2O. This chain is Putative pterin-4-alpha-carbinolamine dehydratase, found in Trichodesmium erythraeum (strain IMS101).